We begin with the raw amino-acid sequence, 350 residues long: Galactokinase (350 aa).

Substrate is bound at residue 14–17 (EHTD). Residues Ser-46 and 98–104 (GSGLSSS) each bind ATP. 2 residues coordinate Mg(2+): Ser-104 and Glu-136. Asp-148 functions as the Proton acceptor in the catalytic mechanism. Position 197 (Tyr-197) interacts with substrate.

Belongs to the GHMP kinase family. GalK subfamily.

It is found in the cytoplasm. It catalyses the reaction alpha-D-galactose + ATP = alpha-D-galactose 1-phosphate + ADP + H(+). The protein operates within carbohydrate metabolism; galactose metabolism. Functionally, catalyzes the transfer of the gamma-phosphate of ATP to D-galactose to form alpha-D-galactose-1-phosphate (Gal-1-P). This is Galactokinase from Thermococcus kodakarensis (strain ATCC BAA-918 / JCM 12380 / KOD1) (Pyrococcus kodakaraensis (strain KOD1)).